Consider the following 544-residue polypeptide: Methionine--tRNA ligase 2 (544 aa).

The 'HIGH' region signature appears at 10 to 20 (PYANGSLHLGH). C141, C144, C153, and C156 together coordinate Zn(2+). The short motif at 329–333 (KLSTS) is the 'KMSKS' region element. T332 contributes to the ATP binding site.

Belongs to the class-I aminoacyl-tRNA synthetase family. MetG type 1 subfamily. Monomer. The cofactor is Zn(2+).

Its subcellular location is the cytoplasm. It carries out the reaction tRNA(Met) + L-methionine + ATP = L-methionyl-tRNA(Met) + AMP + diphosphate. Its function is as follows. Is required not only for elongation of protein synthesis but also for the initiation of all mRNA translation through initiator tRNA(fMet) aminoacylation. The polypeptide is Methionine--tRNA ligase 2 (Bacillus anthracis).